The primary structure comprises 247 residues: Probable transcriptional regulatory protein PMT_1423 (247 aa).

The protein belongs to the TACO1 family.

It localises to the cytoplasm. In Prochlorococcus marinus (strain MIT 9313), this protein is Probable transcriptional regulatory protein PMT_1423.